We begin with the raw amino-acid sequence, 76 residues long: UPF0729 protein C18orf32 (76 aa).

The tract at residues 1 to 37 is necessary for its localzation to the endoplasmic reticulum and lipid droplets; sequence MVCIPCIVIPVLLWIYKKFLEPYIYPLVSPFVSRIWP. Residues 46-76 form a disordered region; sequence DTNKGKVNFKGADMNGLPTKGPTEICDKKKD.

Belongs to the UPF0729 family. In terms of assembly, interacts with DERL1 and AMFR. Post-translationally, undergoes ER-associated degradation (ERAD).

Its subcellular location is the endoplasmic reticulum. It is found in the lipid droplet. Its function is as follows. May activate the NF-kappa-B signaling pathway. This Homo sapiens (Human) protein is UPF0729 protein C18orf32 (C18orf32).